Reading from the N-terminus, the 325-residue chain is Serine/threonine-protein phosphatase 2A activator 1 (325 aa).

This sequence belongs to the PTPA-type PPIase family.

The protein localises to the cytoplasm. Its subcellular location is the nucleus. It catalyses the reaction [protein]-peptidylproline (omega=180) = [protein]-peptidylproline (omega=0). PPIases accelerate the folding of proteins. It catalyzes the cis-trans isomerization of proline imidic peptide bonds in oligopeptides. Acts as a regulatory subunit for PP2A-like phosphatases modulating their activity or substrate specificity, probably by inducing a conformational change in the catalytic subunit, a direct target of the PPIase. Can reactivate inactive phosphatase PP2A-phosphatase methylesterase complexes (PP2Ai) in presence of ATP and Mg(2+) by dissociating the inactive form from the complex. In Schizosaccharomyces pombe (strain 972 / ATCC 24843) (Fission yeast), this protein is Serine/threonine-protein phosphatase 2A activator 1 (rrd1).